A 557-amino-acid polypeptide reads, in one-letter code: High-affinity hexose transporter ght4 (557 aa).

Over 1–9 (MGRTLTSVL) the chain is Cytoplasmic. The helical transmembrane segment at 10 to 30 (VVFISMAGWLGGADTGSISGI) threads the bilayer. Topologically, residues 31–58 (LGMRDFQSRFADRYNPITNSYSYSAWRQ) are extracellular. The helical transmembrane segment at 59–79 (ALLTGTVNAGCLFGAMLSSPF) threads the bilayer. The Cytoplasmic portion of the chain corresponds to 80 to 87 (TEAIGKKY). The chain crosses the membrane as a helical span at residues 88–108 (SIAFFSGCYIIGQILLVTAVP). The Extracellular portion of the chain corresponds to 109 to 112 (SWVQ). Residues 113-133 (IMVGKLFTGLTIGALSVLSPG) traverse the membrane as a helical segment. The Cytoplasmic portion of the chain corresponds to 134 to 144 (YQSEVAPPQIR). The chain crosses the membrane as a helical span at residues 145–165 (GAVVSTYQLFQTCGTLIAACI). Over 166 to 179 (NMGTHKLRKTASWR) the chain is Extracellular. Residues 180–200 (TSFGINILWGIFLMVGVLFLP) form a helical membrane-spanning segment. Residues 201–266 (ESPRYLIYKG…VFGKEVRYRT (66 aa)) are Cytoplasmic-facing. Residues 267–285 (VLGFLTMLLRELIGNNYYF) traverse the membrane as a helical segment. Residues 286–301 (YYATQVFKGTGMTDIF) are Extracellular-facing. Residues 302 to 322 (LPAVILGAINFGTTFGALYTI) form a helical membrane-spanning segment. Residues 323 to 328 (DNLGRR) lie on the Cytoplasmic side of the membrane. A helical membrane pass occupies residues 329–349 (NPLIFGAAFQSICFFIYAAVG). The Extracellular segment spans residues 350 to 363 (DRKLIYKNGTSDHR). An N-linked (GlcNAc...) asparagine glycan is attached at Asn-357. Residues 364–384 (AGAVMIVFSCLFLFSYCCSWG) form a helical membrane-spanning segment. Topologically, residues 385 to 404 (PMGWVIVGETFPIRYRSKCA) are cytoplasmic. A helical membrane pass occupies residues 405-425 (AVATSGNWLGNFMVSFFTPFI). Topologically, residues 426 to 432 (SNSIGFK) are extracellular. The chain crosses the membrane as a helical span at residues 433-453 (LGYIYACINMTSAFQIFLMAK). Over 454-557 (ETKGLTLEEV…VSEESHPTWV (104 aa)) the chain is Cytoplasmic. Positions 492–514 (KEEEKREREKSKGYRGQEERFIE) are enriched in basic and acidic residues. The disordered stretch occupies residues 492–557 (KEEEKREREK…VSEESHPTWV (66 aa)). Over residues 524 to 536 (SSASSESFASAGA) the composition is skewed to low complexity. A compositionally biased stretch (basic and acidic residues) spans 547 to 557 (NVSEESHPTWV).

It belongs to the major facilitator superfamily. Sugar transporter (TC 2.A.1.1) family.

Its subcellular location is the membrane. The protein is High-affinity hexose transporter ght4 (ght4) of Schizosaccharomyces pombe (strain 972 / ATCC 24843) (Fission yeast).